A 100-amino-acid chain; its full sequence is Small ribosomal subunit protein uS14c (100 aa).

The segment at 1 to 54 (MARKSLIQRERKRQKLEQKFHSIRRSSKKEISKVSSLSGKWEIHGKLQSPPRNS) is disordered.

Belongs to the universal ribosomal protein uS14 family. Part of the 30S ribosomal subunit.

It is found in the plastid. Its subcellular location is the chloroplast. Binds 16S rRNA, required for the assembly of 30S particles. The polypeptide is Small ribosomal subunit protein uS14c (Piper cenocladum (Ant piper)).